The chain runs to 244 residues: Trypsin (244 aa).

The signal sequence occupies residues 1-15; that stretch reads MKFLVILVLLGAAVA. Residues 16–21 constitute a propeptide, activation peptide; that stretch reads FEDDDK. Residues 22 to 242 enclose the Peptidase S1 domain; that stretch reads IVGGFTCAKN…FVTWIQSTIS (221 aa). Cystine bridges form between cysteine 28-cysteine 158, cysteine 46-cysteine 62, cysteine 130-cysteine 231, cysteine 137-cysteine 204, cysteine 169-cysteine 183, and cysteine 194-cysteine 218. Histidine 61 (charge relay system) is an active-site residue. Ca(2+) contacts are provided by glutamate 73, asparagine 75, and glutamate 83. Residue aspartate 105 is the Charge relay system of the active site. The active-site Charge relay system is serine 198.

The protein belongs to the peptidase S1 family. The cofactor is Ca(2+).

Its subcellular location is the secreted. The protein resides in the extracellular space. It catalyses the reaction Preferential cleavage: Arg-|-Xaa, Lys-|-Xaa.. In Xenopus laevis (African clawed frog), this protein is Trypsin.